The sequence spans 491 residues: UDP-N-acetylmuramate--L-alanine ligase (491 aa).

An ATP-binding site is contributed by 126–132 (GTHGKTT).

It belongs to the MurCDEF family.

It is found in the cytoplasm. The enzyme catalyses UDP-N-acetyl-alpha-D-muramate + L-alanine + ATP = UDP-N-acetyl-alpha-D-muramoyl-L-alanine + ADP + phosphate + H(+). It functions in the pathway cell wall biogenesis; peptidoglycan biosynthesis. Functionally, cell wall formation. The chain is UDP-N-acetylmuramate--L-alanine ligase from Escherichia coli (strain SMS-3-5 / SECEC).